A 370-amino-acid polypeptide reads, in one-letter code: 3-dehydroquinate synthase (370 aa).

NAD(+) is bound by residues 108–112, 132–133, K145, and K154; these read GVIGD and TT. The Zn(2+) site is built by E187, H249, and H267.

The protein belongs to the sugar phosphate cyclases superfamily. Dehydroquinate synthase family. It depends on Co(2+) as a cofactor. Zn(2+) is required as a cofactor. The cofactor is NAD(+).

It is found in the cytoplasm. It catalyses the reaction 7-phospho-2-dehydro-3-deoxy-D-arabino-heptonate = 3-dehydroquinate + phosphate. The protein operates within metabolic intermediate biosynthesis; chorismate biosynthesis; chorismate from D-erythrose 4-phosphate and phosphoenolpyruvate: step 2/7. Catalyzes the conversion of 3-deoxy-D-arabino-heptulosonate 7-phosphate (DAHP) to dehydroquinate (DHQ). This Cereibacter sphaeroides (strain ATCC 17029 / ATH 2.4.9) (Rhodobacter sphaeroides) protein is 3-dehydroquinate synthase.